The primary structure comprises 76 residues: Vasotab-TY2 (76 aa).

Positions 1–21 are cleaved as a signal peptide; the sequence is MKFALFSVLVLMLIATFVAAD. Positions 22-76 constitute a Kazal-like domain; that stretch reads DCPRICTADYTPVCGTPSGGRRSANRTFANQCGLDSHNCLNKGATYDKLHDGECK. Intrachain disulfides connect Cys23–Cys60, Cys27–Cys53, and Cys35–Cys75.

In terms of tissue distribution, expressed by the salivary gland.

Its subcellular location is the secreted. Functionally, vasodilator protein that inhibits vasoconstriction of isolated rat femoral artery induced by phenylephrine. Since platelet aggregation and vasoconstriction are key hemostatic responses, particularly in small wounds, this protein likely participates in the antihemostatic responses during blood feeding. Blocks L-type calcium channels (Cav1/CACNA1) in left ventricular myocytes isolated from rat hearts. The sequence is that of Vasotab-TY2 from Tabanus yao (Horsefly).